Consider the following 63-residue polypeptide: Alpha-conotoxin-like Am1.6 (63 aa).

The N-terminal stretch at 1–21 is a signal peptide; that stretch reads MGMRMMFTVFLLVVLATTVVS. Positions 22-46 are excised as a propeptide; the sequence is FTSYRASDGRNAAAKASDLIALTVR. A ser-Xaa-Pro motif, crucial for potent interaction with nAChR region spans residues 50–52; the sequence is SRP.

It belongs to the conotoxin A superfamily. Is not hydroxylated. Post-translationally, contains 2 disulfide bonds. As to expression, expressed by the venom duct.

It is found in the secreted. Functionally, alpha-conotoxins act on postsynaptic membranes, they bind to the nicotinic acetylcholine receptors (nAChR) and thus inhibit them. The sequence is that of Alpha-conotoxin-like Am1.6 from Conus amadis (Amadis cone).